Consider the following 640-residue polypeptide: Threonine--tRNA ligase (640 aa).

In terms of domain architecture, TGS spans 1–61 (MPTITLPDGS…ENDASLQIIT (61 aa)). Residues 242–533 (DHRKIGKRLG…LIEHYEGAFP (292 aa)) are catalytic. Residues C333, H384, and H510 each contribute to the Zn(2+) site.

It belongs to the class-II aminoacyl-tRNA synthetase family. As to quaternary structure, homodimer. Requires Zn(2+) as cofactor.

Its subcellular location is the cytoplasm. The enzyme catalyses tRNA(Thr) + L-threonine + ATP = L-threonyl-tRNA(Thr) + AMP + diphosphate + H(+). Catalyzes the attachment of threonine to tRNA(Thr) in a two-step reaction: L-threonine is first activated by ATP to form Thr-AMP and then transferred to the acceptor end of tRNA(Thr). Also edits incorrectly charged L-seryl-tRNA(Thr). The sequence is that of Threonine--tRNA ligase from Pseudomonas syringae pv. syringae (strain B728a).